Reading from the N-terminus, the 59-residue chain is Cecropin-C type 1 (59 aa).

Residues 1–23 form the signal peptide; the sequence is MNFTKIFVLIAMAALLLVGQSEA.

It localises to the secreted. Its function is as follows. Cecropins have lytic and antibacterial activity against several Gram-positive and Gram-negative bacteria. The chain is Cecropin-C type 1 (CECC1) from Aedes albopictus (Asian tiger mosquito).